Consider the following 255-residue polypeptide: Octanoyltransferase (255 aa).

Positions Gly-54 to Val-238 constitute a BPL/LPL catalytic domain. Substrate-binding positions include Arg-92–His-99, Ala-167–Gly-169, and Gly-180–Ala-182. Residue Cys-198 is the Acyl-thioester intermediate of the active site.

This sequence belongs to the LipB family.

It localises to the cytoplasm. The enzyme catalyses octanoyl-[ACP] + L-lysyl-[protein] = N(6)-octanoyl-L-lysyl-[protein] + holo-[ACP] + H(+). It functions in the pathway protein modification; protein lipoylation via endogenous pathway; protein N(6)-(lipoyl)lysine from octanoyl-[acyl-carrier-protein]: step 1/2. Functionally, catalyzes the transfer of endogenously produced octanoic acid from octanoyl-acyl-carrier-protein onto the lipoyl domains of lipoate-dependent enzymes. Lipoyl-ACP can also act as a substrate although octanoyl-ACP is likely to be the physiological substrate. This Rhodopseudomonas palustris (strain HaA2) protein is Octanoyltransferase.